We begin with the raw amino-acid sequence, 521 residues long: Na(+)/H(+) antiporter ApNhaP (521 aa).

Residues 1 to 18 (MTIEAAMGEEAIKENLEQ) lie on the Periplasmic side of the membrane. The helical transmembrane segment at 19–39 (FLIVLSVSLGVATLSQISSFF) threads the bilayer. Topologically, residues 40–41 (RQ) are cytoplasmic. The chain crosses the membrane as a helical span at residues 42–62 (IPYTLLLVIVGLGLAFVDIRL). The Periplasmic portion of the chain corresponds to 63 to 94 (VNLSPELILEIFLPPLLFEAAWNIRWRNLKKN). Residues 95–115 (LFPVVLLAIIGVVISVVGIGF) form a helical membrane-spanning segment. The Cytoplasmic portion of the chain corresponds to 116-126 (SLNYFSGLSLP). Residues 127–147 (IALLVGAILAATDPVSVIALF) form a helical membrane-spanning segment. The Periplasmic portion of the chain corresponds to 148–164 (RELGVGERLTVLMEGES). Residues 165-185 (LFNDGVAVVAFSLLVGIPLGT) form a helical membrane-spanning segment. Residues 186–194 (QEFSVTNTL) lie on the Cytoplasmic side of the membrane. Residues 195–215 (IQFVTLQGIGIGCGGVIGFGI) form a helical membrane-spanning segment. Topologically, residues 216–245 (SYLTQRFDLPLVEQSLTLVSAYGTYLITEE) are periplasmic. A helical transmembrane segment spans residues 246–266 (LGGSGVIGVVTVGLILGNFGS). Over 267–276 (RIGMNPRTRL) the chain is Cytoplasmic. A helical transmembrane segment spans residues 277-297 (LVSEFWEFIAFFVNSIVFLLI). Topologically, residues 298–311 (GDQINIRGLADNGQ) are periplasmic. A helical transmembrane segment spans residues 312–332 (LILITIIALVIIRAISIYGLG). Over 333–349 (TISNLITKQDISWQEET) the chain is Cytoplasmic. A helical transmembrane segment spans residues 350-370 (VLWWGGLRGSVSIALALSVPV). The Periplasmic segment spans residues 371–380 (MLDGRQDIIE). Residues 381-401 (AVFGVVLFTLLVQGLTMQTVI) traverse the membrane as a helical segment. The Cytoplasmic portion of the chain corresponds to 402-521 (EKLGLIGDRA…LLQEVLAKPE (120 aa)).

The protein belongs to the monovalent cation:proton antiporter 1 (CPA1) transporter (TC 2.A.36) family.

Its subcellular location is the cell inner membrane. Its function is as follows. Na(+)/H(+) antiporter that extrudes sodium in exchange for external protons. Also shows high Ca(2+)/H(+) antiporter activity at alkaline pH. Does not catalyze exchange between Li(+) and H(+). This Aphanothece halophytica protein is Na(+)/H(+) antiporter ApNhaP (apnhaP).